A 290-amino-acid chain; its full sequence is Bifunctional protein FolD 1 (290 aa).

Residues 164 to 166 (GRS), I193, and I236 each bind NADP(+).

Belongs to the tetrahydrofolate dehydrogenase/cyclohydrolase family. In terms of assembly, homodimer.

It carries out the reaction (6R)-5,10-methylene-5,6,7,8-tetrahydrofolate + NADP(+) = (6R)-5,10-methenyltetrahydrofolate + NADPH. The catalysed reaction is (6R)-5,10-methenyltetrahydrofolate + H2O = (6R)-10-formyltetrahydrofolate + H(+). Its pathway is one-carbon metabolism; tetrahydrofolate interconversion. Its function is as follows. Catalyzes the oxidation of 5,10-methylenetetrahydrofolate to 5,10-methenyltetrahydrofolate and then the hydrolysis of 5,10-methenyltetrahydrofolate to 10-formyltetrahydrofolate. The polypeptide is Bifunctional protein FolD 1 (Geobacter metallireducens (strain ATCC 53774 / DSM 7210 / GS-15)).